A 206-amino-acid polypeptide reads, in one-letter code: Large ribosomal subunit protein uL4 (206 aa).

Positions 47–75 (GTQSAKTRAEVSGGGIKPWRQKGTGRARQ) are disordered.

Belongs to the universal ribosomal protein uL4 family. As to quaternary structure, part of the 50S ribosomal subunit.

Its function is as follows. One of the primary rRNA binding proteins, this protein initially binds near the 5'-end of the 23S rRNA. It is important during the early stages of 50S assembly. It makes multiple contacts with different domains of the 23S rRNA in the assembled 50S subunit and ribosome. In terms of biological role, forms part of the polypeptide exit tunnel. This is Large ribosomal subunit protein uL4 from Clostridium botulinum (strain ATCC 19397 / Type A).